A 484-amino-acid polypeptide reads, in one-letter code: tRNA sulfurtransferase (484 aa).

A THUMP domain is found at 63 to 167; that stretch reads QGIRDRLSCM…DQRLFVVHDQ (105 aa). ATP is bound by residues 185–186, Lys267, Gly289, and Gln298; that span reads LM. Cysteines 346 and 457 form a disulfide. A Rhodanese domain is found at 405-483; that stretch reads ALAGQVIIDI…GHANVRVYRP (79 aa). The active-site Cysteine persulfide intermediate is the Cys457.

The protein belongs to the ThiI family.

It localises to the cytoplasm. The catalysed reaction is [ThiI sulfur-carrier protein]-S-sulfanyl-L-cysteine + a uridine in tRNA + 2 reduced [2Fe-2S]-[ferredoxin] + ATP + H(+) = [ThiI sulfur-carrier protein]-L-cysteine + a 4-thiouridine in tRNA + 2 oxidized [2Fe-2S]-[ferredoxin] + AMP + diphosphate. The enzyme catalyses [ThiS sulfur-carrier protein]-C-terminal Gly-Gly-AMP + S-sulfanyl-L-cysteinyl-[cysteine desulfurase] + AH2 = [ThiS sulfur-carrier protein]-C-terminal-Gly-aminoethanethioate + L-cysteinyl-[cysteine desulfurase] + A + AMP + 2 H(+). Its pathway is cofactor biosynthesis; thiamine diphosphate biosynthesis. Functionally, catalyzes the ATP-dependent transfer of a sulfur to tRNA to produce 4-thiouridine in position 8 of tRNAs, which functions as a near-UV photosensor. Also catalyzes the transfer of sulfur to the sulfur carrier protein ThiS, forming ThiS-thiocarboxylate. This is a step in the synthesis of thiazole, in the thiamine biosynthesis pathway. The sulfur is donated as persulfide by IscS. This chain is tRNA sulfurtransferase, found in Pseudomonas syringae pv. tomato (strain ATCC BAA-871 / DC3000).